We begin with the raw amino-acid sequence, 241 residues long: MNKTTLLYTGKAKQVYATDDPDVLWMAYTNQATALNGEKKAQIAHKGELNRAISTLLFKELTAAGIPTHYLDSPDSTTMIVKKAAMLPLEVVVRNYASGHFVTKFNVKPMMKLDPPIHEYYYKSDELGDPFMNEAQIFALHEATPEQLKQVHALTDRINTYLTQRFAAIGITLVDFKLEYGTLKDGTLVLADELSPDNFRLVDQQTGASLDKDVFRQNRGPLTPVYEEVLSRLQEKGAAHV.

This sequence belongs to the SAICAR synthetase family.

It catalyses the reaction 5-amino-1-(5-phospho-D-ribosyl)imidazole-4-carboxylate + L-aspartate + ATP = (2S)-2-[5-amino-1-(5-phospho-beta-D-ribosyl)imidazole-4-carboxamido]succinate + ADP + phosphate + 2 H(+). Its pathway is purine metabolism; IMP biosynthesis via de novo pathway; 5-amino-1-(5-phospho-D-ribosyl)imidazole-4-carboxamide from 5-amino-1-(5-phospho-D-ribosyl)imidazole-4-carboxylate: step 1/2. This chain is Phosphoribosylaminoimidazole-succinocarboxamide synthase, found in Lacticaseibacillus paracasei (strain ATCC 334 / BCRC 17002 / CCUG 31169 / CIP 107868 / KCTC 3260 / NRRL B-441) (Lactobacillus paracasei).